The primary structure comprises 257 residues: Global transcriptional regulator CodY (257 aa).

The interval 1–155 (MSLLSKTREL…AATVIGMEIL (155 aa)) is GAF domain. A DNA-binding region (H-T-H motif) is located at residues 203-222 (ASKVADRVGITRSVIVNALR).

It belongs to the CodY family.

It is found in the cytoplasm. Its function is as follows. DNA-binding global transcriptional regulator which is involved in the adaptive response to starvation and acts by directly or indirectly controlling the expression of numerous genes in response to nutrient availability. During rapid exponential growth, CodY is highly active and represses genes whose products allow adaptation to nutrient depletion. The sequence is that of Global transcriptional regulator CodY from Staphylococcus haemolyticus (strain JCSC1435).